The following is a 316-amino-acid chain: Protoheme IX farnesyltransferase (316 aa).

The next 9 helical transmembrane spans lie at 28-48, 50-70, 99-119, 122-142, 150-170, 178-198, 223-243, 244-264, and 293-313; these read IIPLLLITTAAAMEIASKGQV, PLLLFLTLLGGTLAAAAAQTL, HALIFALVLASLSLALFVFFV, LSGFLAMTGIAFYMLIYTHLL, IVIGGAAGSIPPLVGWAAVTG, ILFAIIFLWTPPHFWALALMI, IWLYTLIVVPFTFLLIYPLAA, CGVVYGVAALVLGFVFLKKAW, and AMVIDSLPMTSHLIATIASLF.

The protein belongs to the UbiA prenyltransferase family. Protoheme IX farnesyltransferase subfamily.

The protein resides in the cell inner membrane. The enzyme catalyses heme b + (2E,6E)-farnesyl diphosphate + H2O = Fe(II)-heme o + diphosphate. It participates in porphyrin-containing compound metabolism; heme O biosynthesis; heme O from protoheme: step 1/1. Converts heme B (protoheme IX) to heme O by substitution of the vinyl group on carbon 2 of heme B porphyrin ring with a hydroxyethyl farnesyl side group. The protein is Protoheme IX farnesyltransferase of Microcystis aeruginosa (strain NIES-843 / IAM M-2473).